A 647-amino-acid polypeptide reads, in one-letter code: Probable squalene--hopene cyclase (647 aa).

Residues 67–108 (EAKIGNYLRRTQGAHGGWPLVHDGPFDMSASVKSYFALKMIG) form a PFTB 1 repeat. Asp388 serves as the catalytic Proton donor. PFTB repeat units follow at residues 413-454 (IARG…GALL) and 530-577 (IRKA…ALLG).

This sequence belongs to the terpene cyclase/mutase family.

It catalyses the reaction squalene = hop-22(29)-ene. It carries out the reaction squalene + H2O = hopan-22-ol. It participates in secondary metabolite biosynthesis; hopanoid biosynthesis. Catalyzes the cyclization of squalene into hopene. Probably part of an operon y4aABCD involved in the synthesis of an isoprenoid compound. This chain is Probable squalene--hopene cyclase (shc), found in Sinorhizobium fredii (strain NBRC 101917 / NGR234).